We begin with the raw amino-acid sequence, 288 residues long: Adenylate kinase (288 aa).

Position 65–70 (65–70 (GVGKGT)) interacts with ATP. Residues 85–114 (ATGDLVRDELKSSGPLSKQLAEIVNQGKLV) form an NMP region. AMP contacts are provided by residues Thr-86, Arg-91, 112–114 (KLV), 142–145 (GFPR), and Gln-149. The interval 178–226 (GRRICSECGKNFNVASIDVAGENGAPRISMARLNPPFTVCFKLITRADD) is LID. Arg-179 is a binding site for ATP. AMP-binding residues include Arg-223 and Arg-234. ATP is bound at residue Gly-262.

Belongs to the adenylate kinase family. As to quaternary structure, monomer.

It localises to the cytoplasm. The enzyme catalyses AMP + ATP = 2 ADP. Catalyzes the reversible transfer of the terminal phosphate group between ATP and AMP. Plays an important role in cellular energy homeostasis and in adenine nucleotide metabolism. The sequence is that of Adenylate kinase (ADK) from Solanum tuberosum (Potato).